Reading from the N-terminus, the 482-residue chain is MSIVVKNNILWVGQRDWEVRDFHGTEYKTLRGSSYNSYLIREEKNVLIDTVDHKFSREFVQNLRREIDLADLDYIVINHAEEDHAGALTELMMQIPDTPIYCTANAIDSINGHHHHPEWNFHVVKTGDTLDIGNGKQLIFVETPMLHWPDSMMTYLTGDAVLFSNDAFGQHYCDEHLFNDEVDQTELYEQCQRYYANILTPFSRLVTPKITEILGFNLPVEMIATSHGVVWRDNPTQIVEKYLEWAADYQEDRITIFYDTMSNNTRMMADAIAQGITEVDPQVAVKIFNVARSDKNDILTNVFRSKGVLVGTSTMNNVMMPKIAGLVEEMTGLRFRNKRASAFGSHGWSGGAVDRLSTRLQDAGFEMSLSLKAKWRPDIDALELCRQHGRDIARQWALSPLPVAEAATTPEPQDCACAAAAAADLGPMMQCSVCQWVYDPAKGEPNQDVQPGTPWSEVPDNFLCPECSLGKDVFDVLATEAK.

Positions 30–210 are zinc metallo-hydrolase; it reads LRGSSYNSYL…PFSRLVTPKI (181 aa). Fe cation is bound by residues H79, E81, D83, H147, D166, and H227. Positions 254–393 constitute a Flavodoxin-like domain; that stretch reads ITIFYDTMSN…LCRQHGRDIA (140 aa). FMN contacts are provided by residues 260 to 264 and 342 to 369; these read TMSNN and AFGS…EMSL. The 52-residue stretch at 426–477 folds into the Rubredoxin-like domain; sequence GPMMQCSVCQWVYDPAKGEPNQDVQPGTPWSEVPDNFLCPECSLGKDVFDVL. Positions 431, 434, 464, and 467 each coordinate Fe cation.

It in the N-terminal section; belongs to the zinc metallo-hydrolase group 3 family. As to quaternary structure, homotetramer. Requires Fe cation as cofactor. FMN is required as a cofactor.

It is found in the cytoplasm. It participates in nitrogen metabolism; nitric oxide reduction. Functionally, anaerobic nitric oxide reductase; uses NADH to detoxify nitric oxide (NO), protecting several 4Fe-4S NO-sensitive enzymes. Has at least 2 reductase partners, only one of which (NorW, flavorubredoxin reductase) has been identified. NO probably binds to the di-iron center; electrons enter from the NorW at rubredoxin and are transferred sequentially to the FMN center and the di-iron center. Also able to function as an aerobic oxygen reductase. The chain is Anaerobic nitric oxide reductase flavorubredoxin from Klebsiella pneumoniae subsp. pneumoniae (strain ATCC 700721 / MGH 78578).